A 138-amino-acid polypeptide reads, in one-letter code: Extracellular glycoprotein lacritin (138 aa).

Residues 1–19 (MKFTTLLFLAAVAGALVYA) form the signal peptide. Positions 20–79 (EDASSDSTGADPAQEAGTSKPNEEISGPAEPASPPETTTTAQETSAAAVQGTAKVTSSRQ) are disordered. The segment covering 43–67 (EISGPAEPASPPETTTTAQETSAAA) has biased composition (low complexity). Residue Asn119 is glycosylated (N-linked (GlcNAc...) asparagine).

Expressed in secretory granules of many acinar cells in lacrimal gland and in scattered acinar cells of salivary glands.

It localises to the secreted. Functionally, modulates secretion by lacrimal acinar cells. This chain is Extracellular glycoprotein lacritin (LACRT), found in Homo sapiens (Human).